The chain runs to 174 residues: Peptide deformylase (174 aa).

Fe cation is bound by residues Cys96 and His138. The active site involves Glu139. His142 is a binding site for Fe cation.

The protein belongs to the polypeptide deformylase family. Fe(2+) is required as a cofactor.

The enzyme catalyses N-terminal N-formyl-L-methionyl-[peptide] + H2O = N-terminal L-methionyl-[peptide] + formate. Removes the formyl group from the N-terminal Met of newly synthesized proteins. Requires at least a dipeptide for an efficient rate of reaction. N-terminal L-methionine is a prerequisite for activity but the enzyme has broad specificity at other positions. This Helicobacter pylori (strain G27) protein is Peptide deformylase.